A 316-amino-acid chain; its full sequence is MEPVHYSVQGNNILQIFMENFHKEDPVLFLDGTAGEGGHSLLFLKGFPNSKVILCDRDPVMLSRALARLVDFKERVVSIQTNFSEIDSNLLSSHGINDSPQGILLDLGISTFHLFHSGRGFSFKEAEPLDMRLTPNIGINAEDVINTYSKDRLMHIFYTYGEERWSKKIAEVIVERRKQNLISYTSELADLISKIIPRKLWPPGRHPATRIFQALRIEVNQELTHIEKGLDSLLNLLRPEGVIQVISFHSLEDRIVKNSLRNYAKQNGFELLTKKPILPSEEETKENPASRSAKLRVLRKTKSADKKYKKENSKEE.

Residues 37–39, D56, F83, D106, and H113 each bind S-adenosyl-L-methionine; that span reads GGH. The interval 276 to 316 is disordered; sequence PILPSEEETKENPASRSAKLRVLRKTKSADKKYKKENSKEE. Residues 302-316 are compositionally biased toward basic and acidic residues; the sequence is KSADKKYKKENSKEE.

It belongs to the methyltransferase superfamily. RsmH family.

It is found in the cytoplasm. It carries out the reaction cytidine(1402) in 16S rRNA + S-adenosyl-L-methionine = N(4)-methylcytidine(1402) in 16S rRNA + S-adenosyl-L-homocysteine + H(+). In terms of biological role, specifically methylates the N4 position of cytidine in position 1402 (C1402) of 16S rRNA. The chain is Ribosomal RNA small subunit methyltransferase H from Leptospira borgpetersenii serovar Hardjo-bovis (strain JB197).